The sequence spans 181 residues: MASSMLSSAAVVTSPAQATMVAPFTGLKSSAAFPVTRKANNDITSIASNGGRVSCMKVWPPVGKKKFETLSYLPDLTEVELGKEVDYLLRNKWIPCVEFELEHGFVYREHGSTPGYYDGRYWTMWKLPLFGCTDSAQVLKEVQECKTEYPNAFIRIIGFDNNRQVQCISFIAYKPPSFTGA.

The transit peptide at 1–54 (MASSMLSSAAVVTSPAQATMVAPFTGLKSSAAFPVTRKANNDITSIASNGGRVS) directs the protein to the chloroplast.

This sequence belongs to the RuBisCO small chain family. In terms of assembly, heterohexadecamer of 8 large and 8 small subunits.

The protein localises to the plastid. Its subcellular location is the chloroplast. RuBisCO catalyzes two reactions: the carboxylation of D-ribulose 1,5-bisphosphate, the primary event in carbon dioxide fixation, as well as the oxidative fragmentation of the pentose substrate. Both reactions occur simultaneously and in competition at the same active site. Although the small subunit is not catalytic it is essential for maximal activity. The sequence is that of Ribulose bisphosphate carboxylase small subunit, chloroplastic 2 from Brassica napus (Rape).